A 234-amino-acid chain; its full sequence is Probable cyclic nucleotide phosphodiesterase Rmag_0669 (234 aa).

Fe cation-binding residues include Asp11, His13, Asp49, Asn79, His145, His184, and His186. Residues His13, Asp49, and 79 to 80 (NH) each bind AMP. His186 provides a ligand contact to AMP.

The protein belongs to the cyclic nucleotide phosphodiesterase class-III family. Fe(2+) is required as a cofactor.

This is Probable cyclic nucleotide phosphodiesterase Rmag_0669 from Ruthia magnifica subsp. Calyptogena magnifica.